The chain runs to 910 residues: Leucine--tRNA ligase (910 aa).

The 'HIGH' region signature appears at 42 to 52; the sequence is PYPSGKLHMGH. A 'KMSKS' region motif is present at residues 668-672; sequence KMSKS. An ATP-binding site is contributed by Lys-671.

The protein belongs to the class-I aminoacyl-tRNA synthetase family.

It localises to the cytoplasm. It catalyses the reaction tRNA(Leu) + L-leucine + ATP = L-leucyl-tRNA(Leu) + AMP + diphosphate. The protein is Leucine--tRNA ligase of Neisseria meningitidis serogroup A / serotype 4A (strain DSM 15465 / Z2491).